Here is a 341-residue protein sequence, read N- to C-terminus: Uroporphyrinogen decarboxylase (341 aa).

Residues R23–R27, D73, Y148, S203, and H318 each bind substrate.

It belongs to the uroporphyrinogen decarboxylase family. In terms of assembly, homodimer.

The protein resides in the cytoplasm. The catalysed reaction is uroporphyrinogen III + 4 H(+) = coproporphyrinogen III + 4 CO2. Its pathway is porphyrin-containing compound metabolism; protoporphyrin-IX biosynthesis; coproporphyrinogen-III from 5-aminolevulinate: step 4/4. Functionally, catalyzes the decarboxylation of four acetate groups of uroporphyrinogen-III to yield coproporphyrinogen-III. In Brucella anthropi (strain ATCC 49188 / DSM 6882 / CCUG 24695 / JCM 21032 / LMG 3331 / NBRC 15819 / NCTC 12168 / Alc 37) (Ochrobactrum anthropi), this protein is Uroporphyrinogen decarboxylase.